Here is a 210-residue protein sequence, read N- to C-terminus: Probable GTP-binding protein EngB (210 aa).

The EngB-type G domain occupies 30–204; the sequence is QGYEVAFAGR…YRVLADWMEL (175 aa). GTP contacts are provided by residues 38–45, 64–68, 82–85, 149–152, and 182–185; these read GRSNAGKS, GRTQL, DLPG, TKAD, and LFSA. Residues S45 and T66 each contribute to the Mg(2+) site.

This sequence belongs to the TRAFAC class TrmE-Era-EngA-EngB-Septin-like GTPase superfamily. EngB GTPase family. Requires Mg(2+) as cofactor.

Its function is as follows. Necessary for normal cell division and for the maintenance of normal septation. The chain is Probable GTP-binding protein EngB from Pseudomonas putida (strain ATCC 47054 / DSM 6125 / CFBP 8728 / NCIMB 11950 / KT2440).